Reading from the N-terminus, the 387-residue chain is Phosphoglycerate kinase (387 aa).

Residues 21-23 (DLN), Arg-36, 59-62 (HLGR), Arg-113, and Arg-146 contribute to the substrate site. ATP contacts are provided by residues Lys-197, Glu-314, and 340 to 343 (GGDT).

This sequence belongs to the phosphoglycerate kinase family. In terms of assembly, monomer.

It localises to the cytoplasm. The catalysed reaction is (2R)-3-phosphoglycerate + ATP = (2R)-3-phospho-glyceroyl phosphate + ADP. It functions in the pathway carbohydrate degradation; glycolysis; pyruvate from D-glyceraldehyde 3-phosphate: step 2/5. The polypeptide is Phosphoglycerate kinase (Tolumonas auensis (strain DSM 9187 / NBRC 110442 / TA 4)).